A 295-amino-acid chain; its full sequence is Protease HtpX (295 aa).

2 helical membrane-spanning segments follow: residues 4–24 and 41–61; these read ILLF…TLSL and GQLL…SLFI. Zn(2+) is bound at residue H147. The active site involves E148. H151 contacts Zn(2+). 2 consecutive transmembrane segments (helical) span residues 158–178 and 198–218; these read VTMA…ARII and FVAT…IVMW. Residue E224 coordinates Zn(2+).

Belongs to the peptidase M48B family. Zn(2+) is required as a cofactor.

The protein resides in the cell inner membrane. The sequence is that of Protease HtpX from Pseudomonas entomophila (strain L48).